Consider the following 1173-residue polypeptide: Fas-binding factor 1 (1173 aa).

A disordered region spans residues 17-168; sequence MALRTKKGLK…PSSSKTGLQY (152 aa). Positions 46–56 are enriched in basic and acidic residues; the sequence is KPAEPASHAKD. The span at 80-93 shows a compositional bias: low complexity; it reads AGADAEASSVSDAD. Position 172 is a phosphoserine (S172). Disordered regions lie at residues 180–225 and 241–566; these read LAGL…GDTP and TTLG…SSRE. Residues 206–216 show a composition bias toward low complexity; that stretch reads SPGAAAGQGPS. 2 stretches are compositionally biased toward basic and acidic residues: residues 247-258 and 287-299; these read DSPKAERKKTGD and TGER…DKKY. Polar residues-rich tracts occupy residues 331 to 345, 396 to 411, 468 to 477, and 533 to 544; these read VASS…QSVS, SPVQ…MTPS, VISQKKSQNL, and TGSSMSWSQATT. Coiled-coil stretches lie at residues 617 to 742, 808 to 917, and 975 to 1057; these read TAQL…QQAS, QQRE…MNKC, and CELR…VQRQ. Residue K1002 forms a Glycyl lysine isopeptide (Lys-Gly) (interchain with G-Cter in SUMO2) linkage. The segment at 1091-1124 is disordered; it reads ASLPGLPPRVQGPAASSRDAVQAPASSSPQCSQP. Residues 1110 to 1124 are compositionally biased toward low complexity; the sequence is AVQAPASSSPQCSQP.

As to quaternary structure, interacts with PARD3. May interact with FAS cytoplasmic domain. Interacts with TRAPPC14. Broadly expressed.

Its subcellular location is the cytoplasm. It localises to the cytoskeleton. It is found in the microtubule organizing center. The protein localises to the centrosome. The protein resides in the centriole. Its subcellular location is the spindle pole. It localises to the cell junction. Keratin-binding protein required for epithelial cell polarization. Involved in apical junction complex (AJC) assembly via its interaction with PARD3. Required for ciliogenesis. The polypeptide is Fas-binding factor 1 (Fbf1) (Mus musculus (Mouse)).